A 76-amino-acid chain; its full sequence is Exodeoxyribonuclease 7 small subunit (76 aa).

This sequence belongs to the XseB family. As to quaternary structure, heterooligomer composed of large and small subunits.

The protein localises to the cytoplasm. The enzyme catalyses Exonucleolytic cleavage in either 5'- to 3'- or 3'- to 5'-direction to yield nucleoside 5'-phosphates.. Its function is as follows. Bidirectionally degrades single-stranded DNA into large acid-insoluble oligonucleotides, which are then degraded further into small acid-soluble oligonucleotides. The sequence is that of Exodeoxyribonuclease 7 small subunit from Lactiplantibacillus plantarum (strain ATCC BAA-793 / NCIMB 8826 / WCFS1) (Lactobacillus plantarum).